We begin with the raw amino-acid sequence, 180 residues long: Transcription factor HES-7.1-B (180 aa).

Residues 13-70 enclose the bHLH domain; that stretch reads HRKLLKPLVEKRRRERINNSLEKLRIFLSQTLKSEKLKNPKVEKAEILECTVQFLQSR. Residues 84-116 enclose the Orange domain; sequence YQSGFQHCLETTLHFMNSKPDMNGVTKELLSHQ. The WRPW motif motif lies at 176–179; that stretch reads WRPW.

Transcription repression requires formation of a complex with a corepressor protein of the Groucho/TLE family. Expressed in the presumptive midbrain-hindbrain boundary (MHB) as early as the early gastrula stage (stage 10.5). Expression in the MHB continues through to tailbud stage. Also transiently expressed in the eye anlage at late neurula stage.

It localises to the nucleus. Its function is as follows. Transcriptional repressor. Represses transcription from both N box- and E box-containing promoters. Demarcates the prospective midbrain-hindbrain boundary (MHB) region in the neuroectoderm in early gastrulae embryos by repressing transcription of a number of target genes. This chain is Transcription factor HES-7.1-B (hes7.1-b), found in Xenopus laevis (African clawed frog).